We begin with the raw amino-acid sequence, 150 residues long: Cytochrome c oxidase subunit 5A, mitochondrial (150 aa).

The N-terminal 41 residues, 1-41 (MLGAALRRCAVAATARAGPRGLLHSAPTPGPAAAIQSVRCY), are a transit peptide targeting the mitochondrion. The short motif at 2–17 (LGAALRRCAVAATARA) is the SIFI-degron element. N6-acetyllysine is present on residues Lys87 and Lys113. Thr141 is subject to Phosphothreonine.

This sequence belongs to the cytochrome c oxidase subunit 5A family. In terms of assembly, component of the cytochrome c oxidase (complex IV, CIV), a multisubunit enzyme composed of 14 subunits. The complex is composed of a catalytic core of 3 subunits MT-CO1, MT-CO2 and MT-CO3, encoded in the mitochondrial DNA, and 11 supernumerary subunits COX4I, COX5A, COX5B, COX6A, COX6B, COX6C, COX7A, COX7B, COX7C, COX8 and NDUFA4, which are encoded in the nuclear genome. The complex exists as a monomer or a dimer and forms supercomplexes (SCs) in the inner mitochondrial membrane with NADH-ubiquinone oxidoreductase (complex I, CI) and ubiquinol-cytochrome c oxidoreductase (cytochrome b-c1 complex, complex III, CIII), resulting in different assemblies (supercomplex SCI(1)III(2)IV(1) and megacomplex MCI(2)III(2)IV(2)). Interacts with AFG1L. Interacts with RAB5IF. In terms of processing, in response to mitochondrial stress, the precursor protein is ubiquitinated by the SIFI complex in the cytoplasm before mitochondrial import, leading to its degradation. Within the SIFI complex, UBR4 initiates ubiquitin chain that are further elongated or branched by KCMF1.

It localises to the mitochondrion inner membrane. It participates in energy metabolism; oxidative phosphorylation. Component of the cytochrome c oxidase, the last enzyme in the mitochondrial electron transport chain which drives oxidative phosphorylation. The respiratory chain contains 3 multisubunit complexes succinate dehydrogenase (complex II, CII), ubiquinol-cytochrome c oxidoreductase (cytochrome b-c1 complex, complex III, CIII) and cytochrome c oxidase (complex IV, CIV), that cooperate to transfer electrons derived from NADH and succinate to molecular oxygen, creating an electrochemical gradient over the inner membrane that drives transmembrane transport and the ATP synthase. Cytochrome c oxidase is the component of the respiratory chain that catalyzes the reduction of oxygen to water. Electrons originating from reduced cytochrome c in the intermembrane space (IMS) are transferred via the dinuclear copper A center (CU(A)) of subunit 2 and heme A of subunit 1 to the active site in subunit 1, a binuclear center (BNC) formed by heme A3 and copper B (CU(B)). The BNC reduces molecular oxygen to 2 water molecules using 4 electrons from cytochrome c in the IMS and 4 protons from the mitochondrial matrix. The polypeptide is Cytochrome c oxidase subunit 5A, mitochondrial (COX5A) (Cebuella pygmaea (Pygmy marmoset)).